The primary structure comprises 497 residues: Cobyrinate a,c-diamide synthase (497 aa).

Positions 273–478 (RIGIALDEAF…AHLHGVAYRE (206 aa)) constitute a GATase cobBQ-type domain. Cys-355 acts as the Nucleophile in catalysis.

Belongs to the CobB/CbiA family. The cofactor is Mg(2+).

The catalysed reaction is cob(II)yrinate + 2 L-glutamine + 2 ATP + 2 H2O = cob(II)yrinate a,c diamide + 2 L-glutamate + 2 ADP + 2 phosphate + 2 H(+). It carries out the reaction Ni-sirohydrochlorin + 2 L-glutamine + 2 ATP + 2 H2O = Ni-sirohydrochlorin a,c-diamide + 2 L-glutamate + 2 ADP + 2 phosphate + 2 H(+). Its pathway is cofactor biosynthesis; adenosylcobalamin biosynthesis; cob(II)yrinate a,c-diamide from sirohydrochlorin (anaerobic route): step 10/10. Its function is as follows. Catalyzes the ATP-dependent amidation of the two carboxylate groups at positions a and c of cobyrinate, using either L-glutamine or ammonia as the nitrogen source (Potential). Involved in the biosynthesis of the unique nickel-containing tetrapyrrole coenzyme F430, the prosthetic group of methyl-coenzyme M reductase (MCR), which plays a key role in methanogenesis and anaerobic methane oxidation. Catalyzes the ATP-dependent amidation of the two carboxylate groups at positions a and c of Ni-sirohydrochlorin, using L-glutamine or ammonia as the nitrogen source. The chain is Cobyrinate a,c-diamide synthase from Methanosarcina acetivorans (strain ATCC 35395 / DSM 2834 / JCM 12185 / C2A).